A 488-amino-acid chain; its full sequence is WD repeat-containing protein slp1 (488 aa).

2 disordered regions span residues 1-29 (MEIAGNSSTISPTFSTPTKKRNLVFPNSP) and 74-93 (CGSPRNKSRPASRSDRFIPS). The span at 7–17 (SSTISPTFSTP) shows a compositional bias: low complexity. WD repeat units lie at residues 178 to 215 (IDDYYLNLLDWSNLNVVAVALERNVYVWNADSGSVSAL), 219 to 258 (DESTYVASVKWSHDGSFLSVGLGNGLVDIYDVESQTKLRT), 261 to 298 (GHQARVGCLSWNRHVLSSGSRSGAIHHHDVRIANHQIG), 302 to 341 (GHSSEVCGLAWRSDGLQLASGGNDNVVQIWDARSSIPKFT), 344 to 386 (NHNA…RVNT), 388 to 429 (DAGS…LTKQ), and 434 to 473 (AHDTRVLYSALSPDGRILSTAASDENLKFWRVYDGDHVKR).

It belongs to the WD repeat CDC20/Fizzy family. In terms of assembly, interacts with cdc13, mad3 and mes1.

In terms of biological role, required for mad2-dependent spindle checkpoint activation. Promotes ubiquitin-dependent degradation of cdc13 by the anaphase promoting complex/cyclosome (APC/C). The sequence is that of WD repeat-containing protein slp1 (slp1) from Schizosaccharomyces pombe (strain 972 / ATCC 24843) (Fission yeast).